A 188-amino-acid polypeptide reads, in one-letter code: Elongation factor P (188 aa).

This sequence belongs to the elongation factor P family.

It localises to the cytoplasm. Its pathway is protein biosynthesis; polypeptide chain elongation. Involved in peptide bond synthesis. Stimulates efficient translation and peptide-bond synthesis on native or reconstituted 70S ribosomes in vitro. Probably functions indirectly by altering the affinity of the ribosome for aminoacyl-tRNA, thus increasing their reactivity as acceptors for peptidyl transferase. The protein is Elongation factor P (efp) of Ureaplasma parvum serovar 3 (strain ATCC 700970).